The sequence spans 569 residues: Small ribosomal subunit protein bS1 (569 aa).

6 consecutive S1 motif domains span residues 52-116, 134-199, 220-288, 305-375, 392-462, and 479-548; these read GAIL…LSRE, GSIV…VSRR, GERR…LGLK, GKRV…LGLK, GLRV…LGVK, and GSDI…LSIK.

The protein belongs to the bacterial ribosomal protein bS1 family.

Functionally, binds mRNA; thus facilitating recognition of the initiation point. It is needed to translate mRNA with a short Shine-Dalgarno (SD) purine-rich sequence. This is Small ribosomal subunit protein bS1 (rpsA) from Chlamydia trachomatis serovar D (strain ATCC VR-885 / DSM 19411 / UW-3/Cx).